We begin with the raw amino-acid sequence, 155 residues long: uncharacterized protein (155 aa).

An HTH asnC-type domain is found at 4-65 (IDEVDEIILR…IIDHSFLGEF (62 aa)). A DNA-binding region (H-T-H motif) is located at residues 23 to 42 (LTELSRKVGLTPAAIKNRVE).

This is an uncharacterized protein from Pyrococcus furiosus (strain ATCC 43587 / DSM 3638 / JCM 8422 / Vc1).